Consider the following 364-residue polypeptide: Histidinol-phosphate aminotransferase (364 aa).

An N6-(pyridoxal phosphate)lysine modification is found at Lys225.

It belongs to the class-II pyridoxal-phosphate-dependent aminotransferase family. Histidinol-phosphate aminotransferase subfamily. As to quaternary structure, homodimer. The cofactor is pyridoxal 5'-phosphate.

It catalyses the reaction L-histidinol phosphate + 2-oxoglutarate = 3-(imidazol-4-yl)-2-oxopropyl phosphate + L-glutamate. It functions in the pathway amino-acid biosynthesis; L-histidine biosynthesis; L-histidine from 5-phospho-alpha-D-ribose 1-diphosphate: step 7/9. This Sulfurovum sp. (strain NBC37-1) protein is Histidinol-phosphate aminotransferase.